Consider the following 358-residue polypeptide: Peptide chain release factor 1 (358 aa).

Residue Q233 is modified to N5-methylglutamine.

It belongs to the prokaryotic/mitochondrial release factor family. Methylated by PrmC. Methylation increases the termination efficiency of RF1.

The protein localises to the cytoplasm. Peptide chain release factor 1 directs the termination of translation in response to the peptide chain termination codons UAG and UAA. The polypeptide is Peptide chain release factor 1 (Brevibacillus brevis (strain 47 / JCM 6285 / NBRC 100599)).